The chain runs to 260 residues: Hemin import ATP-binding protein HmuV (260 aa).

One can recognise an ABC transporter domain in the interval 3-239 (LHAQQISLSI…QRLSEVYGCD (237 aa)). 35 to 42 (GPNGSGKS) provides a ligand contact to ATP.

The protein belongs to the ABC transporter superfamily. Heme (hemin) importer (TC 3.A.1.14.5) family. The complex is composed of two ATP-binding proteins (HmuV), two transmembrane proteins (HmuU) and a solute-binding protein (HmuT).

It localises to the cell inner membrane. Functionally, part of the ABC transporter complex HmuTUV involved in hemin import. Responsible for energy coupling to the transport system. The chain is Hemin import ATP-binding protein HmuV from Ruegeria sp. (strain TM1040) (Silicibacter sp.).